A 116-amino-acid polypeptide reads, in one-letter code: Ferredoxin (116 aa).

4Fe-4S ferredoxin-type domains follow at residues 2–31 (TYVV…EGER) and 35–64 (FMLV…PESP). [3Fe-4S] cluster is bound by residues Cys-9 and Cys-17. [4Fe-4S] cluster-binding residues include Cys-21, Cys-44, Cys-47, and Cys-50. Cys-54 serves as a coordination point for [3Fe-4S] cluster.

Requires [4Fe-4S] cluster as cofactor. [3Fe-4S] cluster serves as cofactor.

Ferredoxins are iron-sulfur proteins that transfer electrons in a wide variety of metabolic reactions. The protein is Ferredoxin (fdxA) of Rickettsia conorii (strain ATCC VR-613 / Malish 7).